Reading from the N-terminus, the 447-residue chain is Multicopper oxidase mco (447 aa).

The segment covering 1-25 (MMDMKENDQKRNDMMDMKSHDERKN) has biased composition (basic and acidic residues). The tract at residues 1–43 (MMDMKENDQKRNDMMDMKSHDERKNLNSSQGKNEITFPKVLDP) is disordered. The Cu cation site is built by H107, H109, H147, H149, H375, H378, H380, H428, C429, H430, H434, and M439.

The protein belongs to the multicopper oxidase family. The cofactor is Cu cation.

It localises to the cytoplasm. In terms of biological role, may be involved in copper homeostasis and oxidative stress response. Oxidizes the substrate 3,3'-dimethoxybenzidine in vitro. Also possesses low levels of phenoloxidase and ferroxidase activities. In Staphylococcus aureus, this protein is Multicopper oxidase mco (mco).